The following is a 696-amino-acid chain: Elongation factor G (696 aa).

A tr-type G domain is found at 8 to 286 (EDVRNIGIAA…AVVHYLPSPV (279 aa)). GTP contacts are provided by residues 17–24 (AHIDAGKT), 81–85 (DTPGH), and 135–138 (NKMD).

This sequence belongs to the TRAFAC class translation factor GTPase superfamily. Classic translation factor GTPase family. EF-G/EF-2 subfamily.

It is found in the cytoplasm. In terms of biological role, catalyzes the GTP-dependent ribosomal translocation step during translation elongation. During this step, the ribosome changes from the pre-translocational (PRE) to the post-translocational (POST) state as the newly formed A-site-bound peptidyl-tRNA and P-site-bound deacylated tRNA move to the P and E sites, respectively. Catalyzes the coordinated movement of the two tRNA molecules, the mRNA and conformational changes in the ribosome. In Sulfurovum sp. (strain NBC37-1), this protein is Elongation factor G.